Consider the following 164-residue polypeptide: MDEENVDITEDELSVISDLELDSITRVVGTNEIKTYEDYKLEEANYLKVLDIIKKFSTSDTCECYRCELFERGDIGKFLTRSEFSKLAVLYWERCGRPRNSEALEAFIGRHICIRCAASILLSHHPVIAMRADMRLREIYIENGDKPASSSGTLFSAKGKGPRI.

The chain is Protein 4 from Lettuce big-vein associated virus (isolate Japan/Kagawa) (LBVaV).